The chain runs to 474 residues: Aspartyl/glutamyl-tRNA(Asn/Gln) amidotransferase subunit B (474 aa).

It belongs to the GatB/GatE family. GatB subfamily. Heterotrimer of A, B and C subunits.

It carries out the reaction L-glutamyl-tRNA(Gln) + L-glutamine + ATP + H2O = L-glutaminyl-tRNA(Gln) + L-glutamate + ADP + phosphate + H(+). The enzyme catalyses L-aspartyl-tRNA(Asn) + L-glutamine + ATP + H2O = L-asparaginyl-tRNA(Asn) + L-glutamate + ADP + phosphate + 2 H(+). In terms of biological role, allows the formation of correctly charged Asn-tRNA(Asn) or Gln-tRNA(Gln) through the transamidation of misacylated Asp-tRNA(Asn) or Glu-tRNA(Gln) in organisms which lack either or both of asparaginyl-tRNA or glutaminyl-tRNA synthetases. The reaction takes place in the presence of glutamine and ATP through an activated phospho-Asp-tRNA(Asn) or phospho-Glu-tRNA(Gln). The protein is Aspartyl/glutamyl-tRNA(Asn/Gln) amidotransferase subunit B of Wolbachia sp. subsp. Brugia malayi (strain TRS).